A 181-amino-acid chain; its full sequence is Probable cobalt-precorrin-6B C(15)-methyltransferase (decarboxylating) (181 aa).

S-adenosyl-L-methionine contacts are provided by residues Thr16, Gly40–Gly44, Asp61, and Ala89.

This sequence belongs to the methyltransferase superfamily. Archaeal-type CbiT family.

It catalyses the reaction Co-precorrin-6B + S-adenosyl-L-methionine = Co-precorrin-7 + S-adenosyl-L-homocysteine + CO2. Its pathway is cofactor biosynthesis; adenosylcobalamin biosynthesis; cob(II)yrinate a,c-diamide from sirohydrochlorin (anaerobic route): step 8/10. Functionally, catalyzes the methylation of C-15 in cobalt-precorrin-6B followed by the decarboxylation of C-12 to form cobalt-precorrin-7. This Methanococcus maripaludis (strain C6 / ATCC BAA-1332) protein is Probable cobalt-precorrin-6B C(15)-methyltransferase (decarboxylating).